Here is a 489-residue protein sequence, read N- to C-terminus: Zeta-carotene desaturase (489 aa).

The protein belongs to the zeta carotene desaturase family. It depends on NAD(+) as a cofactor. Requires NADP(+) as cofactor. The cofactor is FAD.

The enzyme catalyses 9,9'-di-cis-zeta-carotene + 2 a quinone = 7,7',9,9'-tetra-cis-lycopene + 2 a quinol. The protein operates within carotenoid biosynthesis; lycopene biosynthesis. Functionally, catalyzes the conversion of zeta-carotene to lycopene via the intermediary of neurosporene. It carries out two consecutive desaturations (introduction of double bonds) at positions C-7 and C-7'. In Synechocystis sp. (strain ATCC 27184 / PCC 6803 / Kazusa), this protein is Zeta-carotene desaturase (crtQ).